The following is a 457-amino-acid chain: GTPase Era, mitochondrial (457 aa).

The N-terminal 18 residues, 1-18, are a transit peptide targeting the mitochondrion; that stretch reads MAFRVSISTFGKSLRVRR. One can recognise an Era-type G domain in the interval 107–350; the sequence is KVLRVAIIGA…RYLVVGAKPG (244 aa). The tract at residues 115 to 122 is G1; it reads GAPNAGKS. A GTP-binding site is contributed by 115 to 122; the sequence is GAPNAGKS. The G2 stretch occupies residues 141–145; it reads HTTRA. A G3 region spans residues 162–165; the sequence is DTPG. GTP contacts are provided by residues 162-166 and 231-234; these read DTPGL and NKVD. Positions 231-234 are G4; the sequence is NKVD. The segment covering 270 to 290 has biased composition (basic and acidic residues); the sequence is AERRTDREARTSGSGDEEKPG. Residues 270 to 300 are disordered; it reads AERRTDREARTSGSGDEEKPGGDVADGEGSE. Residues 328 to 330 form a G5 region; that stretch reads VSA. The 82-residue stretch at 376–457 folds into the KH type-2 domain; it reads LLEYLPKEVP…KLRLSVKVKN (82 aa).

It belongs to the TRAFAC class TrmE-Era-EngA-EngB-Septin-like GTPase superfamily. Era GTPase family.

It localises to the mitochondrion matrix. It is found in the mitochondrion inner membrane. Probable GTPase that plays a role in the mitochondrial ribosomal small subunit assembly. Specifically binds the 12S mitochondrial rRNA (12S mt-rRNA) to a 33 nucleotide section delineating the 3' terminal stem-loop region. May act as a chaperone that protects the 12S mt-rRNA on the 28S mitoribosomal subunit during ribosomal small subunit assembly. In Salmo salar (Atlantic salmon), this protein is GTPase Era, mitochondrial (eral1).